Reading from the N-terminus, the 156-residue chain is Ribosomal RNA large subunit methyltransferase H (156 aa).

S-adenosyl-L-methionine is bound by residues L73, G104, and 123–128; that span reads LSPLTL.

This sequence belongs to the RNA methyltransferase RlmH family. Homodimer.

It localises to the cytoplasm. It catalyses the reaction pseudouridine(1915) in 23S rRNA + S-adenosyl-L-methionine = N(3)-methylpseudouridine(1915) in 23S rRNA + S-adenosyl-L-homocysteine + H(+). Specifically methylates the pseudouridine at position 1915 (m3Psi1915) in 23S rRNA. The sequence is that of Ribosomal RNA large subunit methyltransferase H from Yersinia enterocolitica serotype O:8 / biotype 1B (strain NCTC 13174 / 8081).